The following is a 1441-amino-acid chain: ABC transporter G family member 51 (1441 aa).

The disordered stretch occupies residues 52 to 71 (VLPDPDGLGGGDGGGRGEGQ). Residues 58–69 (GLGGGDGGGRGE) are compositionally biased toward gly residues. Residues 154–428 (LISSHLLRPD…FKSLGFSLPP (275 aa)) form the ABC transporter 1 domain. 187–194 (GPPASGKS) is an ATP binding site. Residues 505-718 (SLVRACFARE…AQRAVSVNEF (214 aa)) enclose the ABC transmembrane type-2 1 domain. Helical transmembrane passes span 523-543 (FLYTFRTCQVAFVGIITSTLF), 558-578 (LYLACLFFGLVHMMFNGFTEM), 615-635 (FIEAVVWSCVVYYTVGFAPTV), 642-662 (MLLLFSIHQMALGLFRMMGAI), 668-688 (IASTFGSAVLLAIFLLGGFVV), and 751-771 (FWIGVGVLLAYSIFFNIMFTL). The ABC transporter 2 domain maps to 838-1090 (MTFHNVNYYV…DMINYFQGIP (253 aa)). Residue 883-890 (GASGSGKT) participates in ATP binding. Residues 1163 to 1380 (TQFMVCLRKQ…TLRGVITSQL (218 aa)) enclose the ABC transmembrane type-2 2 domain. The next 7 helical transmembrane spans lie at 1184–1204 (VVRLFFTSVAAIIFGSIFWNV), 1214–1234 (ILLLMGALYAACLFLGVNNAS), 1271–1291 (VEIPYIAVQTLIFGLITYFMV), 1300–1320 (LVLYLIYMFLTFTYFTFYGMV), 1330–1350 (MASVVSSAFYSLWNLLSGFLI), 1355–1375 (IPGWWIWFYYICPVAWTLRGV), and 1413–1433 (ATVAVLVAFSVFFFSIYAISI).

Belongs to the ABC transporter superfamily. ABCG family. PDR (TC 3.A.1.205) subfamily.

The protein resides in the membrane. May be a general defense protein. The protein is ABC transporter G family member 51 of Oryza sativa subsp. japonica (Rice).